Here is a 408-residue protein sequence, read N- to C-terminus: LL-diaminopimelate aminotransferase (408 aa).

Substrate contacts are provided by tyrosine 15 and glycine 42. Residues tyrosine 72, 108 to 109 (SK), tyrosine 132, asparagine 187, tyrosine 218, and 246 to 248 (SFS) contribute to the pyridoxal 5'-phosphate site. Residues lysine 109, tyrosine 132, and asparagine 187 each coordinate substrate. Lysine 249 is subject to N6-(pyridoxal phosphate)lysine. Positions 257 and 292 each coordinate pyridoxal 5'-phosphate. The substrate site is built by asparagine 292 and arginine 388.

The protein belongs to the class-I pyridoxal-phosphate-dependent aminotransferase family. LL-diaminopimelate aminotransferase subfamily. Homodimer. Pyridoxal 5'-phosphate is required as a cofactor.

The catalysed reaction is (2S,6S)-2,6-diaminopimelate + 2-oxoglutarate = (S)-2,3,4,5-tetrahydrodipicolinate + L-glutamate + H2O + H(+). The protein operates within amino-acid biosynthesis; L-lysine biosynthesis via DAP pathway; LL-2,6-diaminopimelate from (S)-tetrahydrodipicolinate (aminotransferase route): step 1/1. Functionally, involved in the synthesis of meso-diaminopimelate (m-DAP or DL-DAP), required for both lysine and peptidoglycan biosynthesis. Catalyzes the direct conversion of tetrahydrodipicolinate to LL-diaminopimelate. This Prochlorococcus marinus (strain MIT 9312) protein is LL-diaminopimelate aminotransferase.